Consider the following 214-residue polypeptide: Probable transaldolase (214 aa).

The active-site Schiff-base intermediate with substrate is Lys83.

The protein belongs to the transaldolase family. Type 3B subfamily.

It is found in the cytoplasm. It catalyses the reaction D-sedoheptulose 7-phosphate + D-glyceraldehyde 3-phosphate = D-erythrose 4-phosphate + beta-D-fructose 6-phosphate. The protein operates within carbohydrate degradation; pentose phosphate pathway; D-glyceraldehyde 3-phosphate and beta-D-fructose 6-phosphate from D-ribose 5-phosphate and D-xylulose 5-phosphate (non-oxidative stage): step 2/3. Transaldolase is important for the balance of metabolites in the pentose-phosphate pathway. The protein is Probable transaldolase of Geotalea daltonii (strain DSM 22248 / JCM 15807 / FRC-32) (Geobacter daltonii).